Reading from the N-terminus, the 287-residue chain is Large ribosomal subunit protein uL5m (287 aa).

A mitochondrion-targeting transit peptide spans 1–18; it reads MLGIRKNIRISVNFLQRR. Over residues 80-89 the composition is skewed to basic and acidic residues; the sequence is DEHTQKDRLP. The interval 80 to 109 is disordered; that stretch reads DEHTQKDRLPRWIGDNPYYKNRPPQKMRGN.

This sequence belongs to the universal ribosomal protein uL5 family. Component of the mitochondrial large ribosomal subunit (mt-LSU). Mature yeast 74S mitochondrial ribosomes consist of a small (37S) and a large (54S) subunit. The 37S small subunit contains a 15S ribosomal RNA (15S mt-rRNA) and at least 32 different proteins. The 54S large subunit contains a 21S rRNA (21S mt-rRNA) and at least 45 different proteins. Unlike bacterial L5, uL5m does not bind zinc.

It localises to the mitochondrion. Its function is as follows. Component of the mitochondrial ribosome (mitoribosome), a dedicated translation machinery responsible for the synthesis of mitochondrial genome-encoded proteins, including at least some of the essential transmembrane subunits of the mitochondrial respiratory chain. The mitoribosomes are attached to the mitochondrial inner membrane and translation products are cotranslationally integrated into the membrane. This is Large ribosomal subunit protein uL5m (mrpl7) from Schizosaccharomyces pombe (strain 972 / ATCC 24843) (Fission yeast).